A 467-amino-acid polypeptide reads, in one-letter code: Involucrin (467 aa).

The tract at residues 48 to 467 is disordered; that stretch reads EIQEKGFPKH…ELENRTQQEK (420 aa). Basic and acidic residues predominate over residues 49–75; that stretch reads IQEKGFPKHEEKRPNPVKDLPDQKCEH. Low complexity-rich tracts occupy residues 76–95 and 105–177; these read QQQP…QQEL and QQLP…VPQE. Composition is skewed to basic and acidic residues over residues 178–192 and 220–231; these read LHLR…DPEL and RHQEPQEQELHL. Over residues 278 to 290 the composition is skewed to low complexity; that stretch reads QQQQESPEPELQL. Basic and acidic residues-rich tracts occupy residues 295–318, 348–373, 380–391, 415–437, and 450–467; these read QSHE…ELYL, LEEK…HEPD, EKQKLGEPELHL, KQEK…KELS, and KQLE…QQEK.

The protein belongs to the involucrin family. As to quaternary structure, directly or indirectly cross-linked to cornifelin (CNFN). In terms of processing, substrate of transglutaminase. Specific glutamines or lysines are cross-linked to keratins, desmoplakin and to inter involucrin molecules. In terms of tissue distribution, keratinocytes of epidermis and other stratified squamous epithelia.

The protein resides in the cytoplasm. In terms of biological role, part of the insoluble cornified cell envelope (CE) of stratified squamous epithelia. The sequence is that of Involucrin (Ivl) from Mus musculus (Mouse).